We begin with the raw amino-acid sequence, 766 residues long: DNA ligase (766 aa).

The disordered stretch occupies residues 1 to 30; the sequence is MSTVNAKGAKPATDANGQSLNPEEPSEALR. NAD(+)-binding positions include 57-61, 106-107, and glutamate 141; these read DAEYD and SL. Catalysis depends on lysine 143, which acts as the N6-AMP-lysine intermediate. The NAD(+) site is built by arginine 164, glutamate 201, lysine 317, and lysine 341. Residues cysteine 435, cysteine 438, cysteine 454, and cysteine 460 each coordinate Zn(2+). One can recognise a BRCT domain in the interval 669–758; that stretch reads STPRTLEGVT…PEAFGDRADA (90 aa). Residues 747–766 are disordered; it reads QGPEAFGDRADAADQPAAGE.

This sequence belongs to the NAD-dependent DNA ligase family. LigA subfamily. Mg(2+) is required as a cofactor. It depends on Mn(2+) as a cofactor.

The enzyme catalyses NAD(+) + (deoxyribonucleotide)n-3'-hydroxyl + 5'-phospho-(deoxyribonucleotide)m = (deoxyribonucleotide)n+m + AMP + beta-nicotinamide D-nucleotide.. DNA ligase that catalyzes the formation of phosphodiester linkages between 5'-phosphoryl and 3'-hydroxyl groups in double-stranded DNA using NAD as a coenzyme and as the energy source for the reaction. It is essential for DNA replication and repair of damaged DNA. This is DNA ligase from Kocuria rhizophila (strain ATCC 9341 / DSM 348 / NBRC 103217 / DC2201).